Reading from the N-terminus, the 354-residue chain is Stearoyl-CoA desaturase (354 aa).

Residues 1–28 (MPGHLLQEEMTSSYTTTTTTITEPPSES) form a disordered region. The Cytoplasmic segment spans residues 1–67 (MPGHLLQEEM…EGPPPKLEYV (67 aa)). Low complexity predominate over residues 8 to 28 (EEMTSSYTTTTTTITEPPSES). The chain crosses the membrane as a helical span at residues 68-88 (WRNIILMALLHLGALYGLVLV). Asparagine 70 provides a ligand contact to substrate. At 89-92 (PSSK) the chain is on the lumenal side. Residues 93–113 (VYTLLWAFVYYVISIEGIGAG) form a helical membrane-spanning segment. The Cytoplasmic portion of the chain corresponds to 114–212 (VHRLWSHRTY…EKLVMFQRRY (99 aa)). Fe cation is bound by residues histidine 115 and histidine 120. Positions 115-120 (HRLWSH) match the Histidine box-1 motif. Substrate is bound by residues asparagine 143, arginine 150, and aspartate 151. Residues histidine 152, histidine 155, and histidine 156 each coordinate Fe cation. The short motif at 152–156 (HRAHH) is the Histidine box-2 element. Arginine 183 and lysine 184 together coordinate substrate. Residue serine 198 is modified to Phosphoserine. Residues 213–232 (YKPAILLMCFILPTFVPWYF) traverse the membrane as a helical segment. Residues 233–236 (WGEA) are Lumenal-facing. The chain crosses the membrane as a helical span at residues 237–258 (FVNSLCVSTFLRYTLVLNATWL). A substrate-binding site is contributed by tryptophan 257. At 259 to 354 (VNSAAHLYGY…RTGDGSCKSG (96 aa)) the chain is on the cytoplasmic side. Residues histidine 264, histidine 293, histidine 296, and histidine 297 each coordinate Fe cation. The Histidine box-3 motif lies at 293-297 (HNYHH).

Belongs to the fatty acid desaturase type 1 family. Fe(2+) is required as a cofactor.

Its subcellular location is the endoplasmic reticulum membrane. The enzyme catalyses octadecanoyl-CoA + 2 Fe(II)-[cytochrome b5] + O2 + 2 H(+) = (9Z)-octadecenoyl-CoA + 2 Fe(III)-[cytochrome b5] + 2 H2O. The catalysed reaction is hexadecanoyl-CoA + 2 Fe(II)-[cytochrome b5] + O2 + 2 H(+) = (9Z)-hexadecenoyl-CoA + 2 Fe(III)-[cytochrome b5] + 2 H2O. In terms of biological role, stearoyl-CoA desaturase that utilizes O(2) and electrons from reduced cytochrome b5 to introduce the first double bond into saturated fatty acyl-CoA substrates. Catalyzes the insertion of a cis double bond at the delta-9 position into fatty acyl-CoA substrates including palmitoyl-CoA and stearoyl-CoA. Gives rise to a mixture of 16:1 and 18:1 unsaturated fatty acids. Plays an important role in lipid biosynthesis. Plays an important role in regulating the expression of genes that are involved in lipogenesis and in regulating mitochondrial fatty acid oxidation. Plays an important role in body energy homeostasis. Contributes to the biosynthesis of membrane phospholipids, cholesterol esters and triglycerides. In Mesocricetus auratus (Golden hamster), this protein is Stearoyl-CoA desaturase (SCD).